Here is a 364-residue protein sequence, read N- to C-terminus: Protein BRI1-5 ENHANCED 1 (364 aa).

A compositionally biased stretch (acidic residues) spans 1–11 (MVREEQEEDDN). The interval 1–22 (MVREEQEEDDNNNNNNGGGERK) is disordered. Residues 44 to 49 (GGSGFV), Arg-69, 98 to 99 (DL), Tyr-202, Lys-206, Val-232, and Ser-244 each bind NADP(+). Residue Lys-206 is the Proton donor of the active site.

Belongs to the NAD(P)-dependent epimerase/dehydratase family. As to quaternary structure, monomer. Mainly present in cell elongating-containing tissues. Strongly expressed in roots and flowers, also observed in petioles, stems, leaves and siliques.

Its subcellular location is the cytoplasm. It participates in plant hormone biosynthesis; brassinosteroid biosynthesis. Functionally, element of the brassinosteroid metabolic pathway that regulates typhasterol (TY), castasterone (CS) and brassinolide (BL) levels. Involved in the control of organ elongation. The protein is Protein BRI1-5 ENHANCED 1 of Arabidopsis thaliana (Mouse-ear cress).